We begin with the raw amino-acid sequence, 288 residues long: ATP synthase gamma chain (288 aa).

This sequence belongs to the ATPase gamma chain family. In terms of assembly, F-type ATPases have 2 components, CF(1) - the catalytic core - and CF(0) - the membrane proton channel. CF(1) has five subunits: alpha(3), beta(3), gamma(1), delta(1), epsilon(1). CF(0) has three main subunits: a, b and c.

It is found in the cell inner membrane. Its function is as follows. Produces ATP from ADP in the presence of a proton gradient across the membrane. The gamma chain is believed to be important in regulating ATPase activity and the flow of protons through the CF(0) complex. This Actinobacillus pleuropneumoniae serotype 3 (strain JL03) protein is ATP synthase gamma chain.